The following is a 432-amino-acid chain: Asparagine--tRNA ligase (432 aa).

Belongs to the class-II aminoacyl-tRNA synthetase family. Homodimer.

Its subcellular location is the cytoplasm. It catalyses the reaction tRNA(Asn) + L-asparagine + ATP = L-asparaginyl-tRNA(Asn) + AMP + diphosphate + H(+). In Lactobacillus helveticus (strain DPC 4571), this protein is Asparagine--tRNA ligase.